We begin with the raw amino-acid sequence, 450 residues long: Glucose-6-phosphate isomerase (450 aa).

Residue Thr-38 is modified to Phosphothreonine. Glu-290 functions as the Proton donor in the catalytic mechanism. Active-site residues include His-311 and Lys-425.

The protein belongs to the GPI family.

Its subcellular location is the cytoplasm. It catalyses the reaction alpha-D-glucose 6-phosphate = beta-D-fructose 6-phosphate. It participates in carbohydrate biosynthesis; gluconeogenesis. It functions in the pathway carbohydrate degradation; glycolysis; D-glyceraldehyde 3-phosphate and glycerone phosphate from D-glucose: step 2/4. In terms of biological role, catalyzes the reversible isomerization of glucose-6-phosphate to fructose-6-phosphate. The sequence is that of Glucose-6-phosphate isomerase from Bacillus licheniformis (strain ATCC 14580 / DSM 13 / JCM 2505 / CCUG 7422 / NBRC 12200 / NCIMB 9375 / NCTC 10341 / NRRL NRS-1264 / Gibson 46).